The primary structure comprises 455 residues: UDP-N-acetylmuramoylalanine--D-glutamate ligase (455 aa).

An ATP-binding site is contributed by 117-123; it reads GSAGKTT.

It belongs to the MurCDEF family.

It is found in the cytoplasm. It carries out the reaction UDP-N-acetyl-alpha-D-muramoyl-L-alanine + D-glutamate + ATP = UDP-N-acetyl-alpha-D-muramoyl-L-alanyl-D-glutamate + ADP + phosphate + H(+). It participates in cell wall biogenesis; peptidoglycan biosynthesis. In terms of biological role, cell wall formation. Catalyzes the addition of glutamate to the nucleotide precursor UDP-N-acetylmuramoyl-L-alanine (UMA). The protein is UDP-N-acetylmuramoylalanine--D-glutamate ligase of Symbiobacterium thermophilum (strain DSM 24528 / JCM 14929 / IAM 14863 / T).